A 301-amino-acid polypeptide reads, in one-letter code: UDP-N-acetylenolpyruvoylglucosamine reductase (301 aa).

An FAD-binding PCMH-type domain is found at 30 to 194 (VGGEADYLVF…LSVKFALAPG (165 aa)). The active site involves Arg173. Ser223 functions as the Proton donor in the catalytic mechanism. Glu293 is a catalytic residue.

It belongs to the MurB family. FAD serves as cofactor.

It is found in the cytoplasm. It catalyses the reaction UDP-N-acetyl-alpha-D-muramate + NADP(+) = UDP-N-acetyl-3-O-(1-carboxyvinyl)-alpha-D-glucosamine + NADPH + H(+). Its pathway is cell wall biogenesis; peptidoglycan biosynthesis. Cell wall formation. The chain is UDP-N-acetylenolpyruvoylglucosamine reductase from Streptococcus pneumoniae (strain JJA).